The sequence spans 81 residues: UPF0386 protein Smed_0945 (81 aa).

The protein belongs to the UPF0386 family.

The sequence is that of UPF0386 protein Smed_0945 from Sinorhizobium medicae (strain WSM419) (Ensifer medicae).